Reading from the N-terminus, the 419-residue chain is Mitochondrial chaperone BCS1 (419 aa).

The Mitochondrial intermembrane portion of the chain corresponds to 2 to 15 (PLSDFILALKDNPY). A helical transmembrane segment spans residues 16-32 (FGAGFGLVGVGTALALA). At 33–419 (RKGVQLGLVA…AIHNAESLRR (387 aa)) the chain is on the mitochondrial matrix side. Tyr-181 is subject to Phosphotyrosine. 230–237 (GPPGCGKS) serves as a coordination point for ATP.

This sequence belongs to the AAA ATPase family. BCS1 subfamily. In terms of assembly, interacts with LETM1. Ubiquitous.

It localises to the mitochondrion inner membrane. The enzyme catalyses ATP + H2O = ADP + phosphate + H(+). Its function is as follows. Chaperone necessary for the incorporation of Rieske iron-sulfur protein UQCRFS1 into the mitochondrial respiratory chain complex III. Plays an important role in the maintenance of mitochondrial tubular networks, respiratory chain assembly and formation of the LETM1 complex. In Homo sapiens (Human), this protein is Mitochondrial chaperone BCS1 (BCS1L).